The following is a 918-amino-acid chain: Isoleucine--tRNA ligase (918 aa).

The short motif at 57–67 is the 'HIGH' region element; the sequence is PYANGHIHIGH. Glu564 provides a ligand contact to L-isoleucyl-5'-AMP. A 'KMSKS' region motif is present at residues 605 to 609; that stretch reads KMSKS. Lys608 provides a ligand contact to ATP. Residues Cys888, Cys891, Cys903, and Cys906 each coordinate Zn(2+).

This sequence belongs to the class-I aminoacyl-tRNA synthetase family. IleS type 1 subfamily. As to quaternary structure, monomer. Zn(2+) is required as a cofactor.

It is found in the cytoplasm. It catalyses the reaction tRNA(Ile) + L-isoleucine + ATP = L-isoleucyl-tRNA(Ile) + AMP + diphosphate. In terms of biological role, catalyzes the attachment of isoleucine to tRNA(Ile). As IleRS can inadvertently accommodate and process structurally similar amino acids such as valine, to avoid such errors it has two additional distinct tRNA(Ile)-dependent editing activities. One activity is designated as 'pretransfer' editing and involves the hydrolysis of activated Val-AMP. The other activity is designated 'posttransfer' editing and involves deacylation of mischarged Val-tRNA(Ile). This Nitratiruptor sp. (strain SB155-2) protein is Isoleucine--tRNA ligase.